A 456-amino-acid polypeptide reads, in one-letter code: Bifunctional protein GlmU (456 aa).

The pyrophosphorylase stretch occupies residues 1–229 (MLNNAMSVVI…LSEVEGVNNR (229 aa)). UDP-N-acetyl-alpha-D-glucosamine is bound by residues 11–14 (LAAG), K25, Q76, 81–82 (GT), 103–105 (YGD), G140, E154, N169, and N227. Position 105 (D105) interacts with Mg(2+). N227 provides a ligand contact to Mg(2+). Positions 230-250 (LQLSRLERVYQSEQAEKLLLA) are linker. The segment at 251-456 (GVMLRDPARF…EGWRRPVKKK (206 aa)) is N-acetyltransferase. UDP-N-acetyl-alpha-D-glucosamine contacts are provided by R333 and K351. Residue H363 is the Proton acceptor of the active site. Residues Y366 and N377 each coordinate UDP-N-acetyl-alpha-D-glucosamine. Acetyl-CoA contacts are provided by residues A380, 386–387 (NY), S405, A423, and R440.

The protein in the N-terminal section; belongs to the N-acetylglucosamine-1-phosphate uridyltransferase family. This sequence in the C-terminal section; belongs to the transferase hexapeptide repeat family. As to quaternary structure, homotrimer. Mg(2+) serves as cofactor.

Its subcellular location is the cytoplasm. It carries out the reaction alpha-D-glucosamine 1-phosphate + acetyl-CoA = N-acetyl-alpha-D-glucosamine 1-phosphate + CoA + H(+). It catalyses the reaction N-acetyl-alpha-D-glucosamine 1-phosphate + UTP + H(+) = UDP-N-acetyl-alpha-D-glucosamine + diphosphate. It functions in the pathway nucleotide-sugar biosynthesis; UDP-N-acetyl-alpha-D-glucosamine biosynthesis; N-acetyl-alpha-D-glucosamine 1-phosphate from alpha-D-glucosamine 6-phosphate (route II): step 2/2. It participates in nucleotide-sugar biosynthesis; UDP-N-acetyl-alpha-D-glucosamine biosynthesis; UDP-N-acetyl-alpha-D-glucosamine from N-acetyl-alpha-D-glucosamine 1-phosphate: step 1/1. The protein operates within bacterial outer membrane biogenesis; LPS lipid A biosynthesis. Its function is as follows. Catalyzes the last two sequential reactions in the de novo biosynthetic pathway for UDP-N-acetylglucosamine (UDP-GlcNAc). The C-terminal domain catalyzes the transfer of acetyl group from acetyl coenzyme A to glucosamine-1-phosphate (GlcN-1-P) to produce N-acetylglucosamine-1-phosphate (GlcNAc-1-P), which is converted into UDP-GlcNAc by the transfer of uridine 5-monophosphate (from uridine 5-triphosphate), a reaction catalyzed by the N-terminal domain. This is Bifunctional protein GlmU from Shigella boydii serotype 18 (strain CDC 3083-94 / BS512).